Reading from the N-terminus, the 192-residue chain is ATP synthase subunit b 2 (192 aa).

A helical transmembrane segment spans residues 39–59; the sequence is SGFLAQLIWLALAFGLLYYLM.

Belongs to the ATPase B chain family. In terms of assembly, F-type ATPases have 2 components, F(1) - the catalytic core - and F(0) - the membrane proton channel. F(1) has five subunits: alpha(3), beta(3), gamma(1), delta(1), epsilon(1). F(0) has three main subunits: a(1), b(2) and c(10-14). The alpha and beta chains form an alternating ring which encloses part of the gamma chain. F(1) is attached to F(0) by a central stalk formed by the gamma and epsilon chains, while a peripheral stalk is formed by the delta and b chains.

Its subcellular location is the cell inner membrane. Functionally, f(1)F(0) ATP synthase produces ATP from ADP in the presence of a proton or sodium gradient. F-type ATPases consist of two structural domains, F(1) containing the extramembraneous catalytic core and F(0) containing the membrane proton channel, linked together by a central stalk and a peripheral stalk. During catalysis, ATP synthesis in the catalytic domain of F(1) is coupled via a rotary mechanism of the central stalk subunits to proton translocation. In terms of biological role, component of the F(0) channel, it forms part of the peripheral stalk, linking F(1) to F(0). The b'-subunit is a diverged and duplicated form of b found in plants and photosynthetic bacteria. The polypeptide is ATP synthase subunit b 2 (atpF2) (Methylobacterium radiotolerans (strain ATCC 27329 / DSM 1819 / JCM 2831 / NBRC 15690 / NCIMB 10815 / 0-1)).